The following is a 585-amino-acid chain: uncharacterized protein (585 aa).

A run of 6 helical transmembrane segments spans residues 18–38 (FMWS…YPII), 55–75 (AAWV…ATFF), 128–148 (FFLS…AISL), 150–170 (VMFY…PFLA), 238–258 (IWSA…VALL), and 276–296 (VAFF…GFVI). In terms of domain architecture, ABC transmembrane type-1 spans 18–301 (FMWSLLAMLL…LGFVINMFSQ (284 aa)). An ABC transporter domain is found at 335-570 (VHFKNVSLAY…GGYYKKIYDL (236 aa)). 369–376 (GPTGSGKS) is an ATP binding site.

It belongs to the ABC transporter superfamily.

Its subcellular location is the cell membrane. This is an uncharacterized protein from Bacillus subtilis (strain 168).